The primary structure comprises 757 residues: Relaxin receptor 1 (757 aa).

Residues 1 to 409 (MTSGSVFFYI…ENLLASIIQR (409 aa)) lie on the Extracellular side of the membrane. In terms of domain architecture, LDL-receptor class A spans 26–63 (KCSLGYFPCGNITKCLPQLLHCNGVDDCGNQADEDNCG). 3 disulfides stabilise this stretch: Cys27-Cys40, Cys34-Cys53, and Cys47-Cys62. The N-linked (GlcNAc...) asparagine glycan is linked to Asn36. Positions 45, 48, 50, 52, 58, and 59 each coordinate Ca(2+). The LRRNT domain occupies 91–127 (ETPECLVGSVPVQCLCQGLELDCDETNLRAVPSVSSN). The N-linked (GlcNAc...) asparagine glycan is linked to Asn127. 9 LRR repeats span residues 151–172 (DLQK…AFRG), 175–196 (SLTK…VFED), 199–220 (RLEW…TFYG), 223–244 (SLIL…PLCQ), 248–269 (RLHW…TFIS), 272–293 (NLTV…TFAP), 296–317 (KLDE…IFKD), 320–341 (ELSQ…QFDY), and 344–365 (KLKS…MFRP). Asn264 and Asn272 each carry an N-linked (GlcNAc...) asparagine glycan. N-linked (GlcNAc...) asparagine glycosylation is present at Asn325. N-linked (GlcNAc...) asparagine glycosylation is present at Asn368. The chain crosses the membrane as a helical span at residues 410-430 (VFVWVVSAVTCFGNIFVICMR). Residues 431–443 (PYIRSENKLYAMS) lie on the Cytoplasmic side of the membrane. The helical transmembrane segment at 444-464 (IISLCCADCLMGIYLFVIGGF) threads the bilayer. Topologically, residues 465-486 (DLKFRGEYNKHAQLWMESTHCQ) are extracellular. Cys485 and Cys563 are oxidised to a cystine. The helical transmembrane segment at 487–507 (LVGSLAILSTEVSVLLLTFLT) threads the bilayer. Residues 508–527 (LEKYICIVYPFRCVRPGKCR) are Cytoplasmic-facing. A helical transmembrane segment spans residues 528–548 (TITVLILIWITGFIVAFIPLS). At 549–577 (NKEFFKNYYGTNGVCFPLHSEDTESIGAQ) the chain is on the extracellular side. The chain crosses the membrane as a helical span at residues 578–598 (IYSVAIFLGINLAAFIIIVFS). Over 599–629 (YGSMFYSVHQSAITATEIRNQVKKEMILAKR) the chain is Cytoplasmic. A helical transmembrane segment spans residues 630–650 (FFFIVFTDALCWIPIFVVKFL). Ser651 is a topological domain (extracellular). Residues 652–672 (LLQVEIPGTITSWVVIFILPI) traverse the membrane as a helical segment. Residues 673–757 (NSALNPILYT…SQSTRLNSYS (85 aa)) lie on the Cytoplasmic side of the membrane.

Belongs to the G-protein coupled receptor 1 family. As to quaternary structure, interacts with C1QTNF8. Expressed in the brain, kidney, testis, placenta, uterus, ovary, adrenal, prostate, skin and heart. Not detected in spleen.

Its subcellular location is the cell membrane. Functionally, receptor for relaxins. The activity of this receptor is mediated by G proteins leading to stimulation of adenylate cyclase and an increase of cAMP. Binding of the ligand may also activate a tyrosine kinase pathway that inhibits the activity of a phosphodiesterase that degrades cAMP. The polypeptide is Relaxin receptor 1 (RXFP1) (Homo sapiens (Human)).